The following is a 490-amino-acid chain: Aspartyl/glutamyl-tRNA(Asn/Gln) amidotransferase subunit B (490 aa).

It belongs to the GatB/GatE family. GatB subfamily. As to quaternary structure, heterotrimer of A, B and C subunits.

The catalysed reaction is L-glutamyl-tRNA(Gln) + L-glutamine + ATP + H2O = L-glutaminyl-tRNA(Gln) + L-glutamate + ADP + phosphate + H(+). The enzyme catalyses L-aspartyl-tRNA(Asn) + L-glutamine + ATP + H2O = L-asparaginyl-tRNA(Asn) + L-glutamate + ADP + phosphate + 2 H(+). Its function is as follows. Allows the formation of correctly charged Asn-tRNA(Asn) or Gln-tRNA(Gln) through the transamidation of misacylated Asp-tRNA(Asn) or Glu-tRNA(Gln) in organisms which lack either or both of asparaginyl-tRNA or glutaminyl-tRNA synthetases. The reaction takes place in the presence of glutamine and ATP through an activated phospho-Asp-tRNA(Asn) or phospho-Glu-tRNA(Gln). This is Aspartyl/glutamyl-tRNA(Asn/Gln) amidotransferase subunit B from Prochlorococcus marinus (strain MIT 9515).